Consider the following 1408-residue polypeptide: ABC multidrug transporter MDR1 (1408 aa).

The segment covering 1 to 13 has biased composition (low complexity); the sequence is MSASPSPIGAAAG. The segment at 1–103 is disordered; the sequence is MSASPSPIGA…SISSAVPKSH (103 aa). The segment covering 17–38 has biased composition (basic and acidic residues); the sequence is LQARRDEEVVDSEKDALAHDSH. The next 2 helical transmembrane spans lie at 147-167 and 223-243; these read FAAP…IAAG and LYLM…MFIW. An ABC transmembrane type-1 1 domain is found at 157–464; that stretch reads VFGLLLAIAA…LAPELAAVTK (308 aa). N-linked (GlcNAc...) asparagine glycosylation is present at Asn244. Transmembrane regions (helical) follow at residues 296–316, 321–341, 408–428, and 436–456; these read KVAL…LAFV, LAGA…IMMT, IMFF…GILV, and GIVI…AMLA. The 246-residue stretch at 499–744 folds into the ABC transporter 1 domain; sequence ISFENVRFHY…ENGPYAQLVN (246 aa). Residue 534–541 coordinates ATP; the sequence is GASGSGKS. The next 2 helical transmembrane spans lie at 838–858 and 882–902; these read IFAF…AILF and LWYF…SAGF. One can recognise an ABC transmembrane type-1 2 domain in the interval 838–1125; the sequence is IFAFIAAICA…VFTFVPDASK (288 aa). N-linked (GlcNAc...) asparagine glycosylation occurs at Asn934. 4 helical membrane-spanning segments follow: residues 952 to 972, 973 to 993, 1072 to 1092, and 1099 to 1119; these read GLFG…IGGC, IIGL…IPIL, GLTF…IIDG, and FYTV…VFTF. N-linked (GlcNAc...) asparagine glycosylation is found at Asn1127 and Asn1182. The ABC transporter 2 domain maps to 1162–1402; it reads VRIEGVHFRY…KGGYYDLVQM (241 aa). Residue 1197–1204 coordinates ATP; the sequence is GPSGCGKS. Asn1404 is a glycosylation site (N-linked (GlcNAc...) asparagine).

The protein belongs to the ABC transporter superfamily. ABCB family. Multidrug resistance exporter (TC 3.A.1.201) subfamily.

The protein resides in the cell membrane. The enzyme catalyses itraconazole(in) + ATP + H2O = itraconazole(out) + ADP + phosphate + H(+). The catalysed reaction is voriconazole(in) + ATP + H2O = voriconazole(out) + ADP + phosphate + H(+). It carries out the reaction fluconazole(in) + ATP + H2O = fluconazole(out) + ADP + phosphate + H(+). In terms of biological role, pleiotropic ABC efflux transporter that confers resistance to structurally and functionally unrelated compounds including azoles such as fluconazole (FLC), itraconazole (ITC), posaconazole (POS), nocodazole and voriconazole (VRC). The chain is ABC multidrug transporter MDR1 from Cryptococcus deuterogattii (strain R265) (Cryptococcus gattii VGII (strain R265)).